The sequence spans 868 residues: Protein NIP100 (868 aa).

The region spanning 34 to 84 is the CAP-Gly domain; that stretch reads GETQFAKGIWYGIELDKPLGKNDGSANGIRYFDIDLKKANSNGGYYGLFCK. 3 coiled-coil regions span residues 101–175, 207–375, and 645–776; these read LNGN…HLDN, LDQT…QEEL, and SLLS…QIKE.

As to quaternary structure, component of the dynactin complex composed of at least ARP1, JNM1, NIP100 and ARP10. Dynactin comprises a short rod of the ARP1 filament attached to ARP10 at its pointed-end and probably associated with the capping protein at its barbed-end. The rod is implicated in dynein cargo binding. A sidearm formed by NIP100 projects from the ARP1 filament and is implicated in motor binding.

It localises to the cytoplasm. The protein localises to the cytoskeleton. It is found in the spindle pole. Motor-binding component of the dynactin complex which assists cytoplasmic dynein by increasing its processivity and by regulation of its cargo binding. The dynactin complex is required for the spindle translocation late in anaphase and is involved in a cell wall synthesis checkpoint. This is Protein NIP100 (NIP100) from Saccharomyces cerevisiae (strain ATCC 204508 / S288c) (Baker's yeast).